The chain runs to 206 residues: Protein GrpE (206 aa).

Over residues 1-15 (MTDSNGQKDNNQDQA) the composition is skewed to polar residues. Residues 1 to 38 (MTDSNGQKDNNQDQAQPADPVVSKPYIMPDDPEEGTNE) form a disordered region.

Belongs to the GrpE family. Homodimer.

The protein localises to the cytoplasm. Its function is as follows. Participates actively in the response to hyperosmotic and heat shock by preventing the aggregation of stress-denatured proteins, in association with DnaK and GrpE. It is the nucleotide exchange factor for DnaK and may function as a thermosensor. Unfolded proteins bind initially to DnaJ; upon interaction with the DnaJ-bound protein, DnaK hydrolyzes its bound ATP, resulting in the formation of a stable complex. GrpE releases ADP from DnaK; ATP binding to DnaK triggers the release of the substrate protein, thus completing the reaction cycle. Several rounds of ATP-dependent interactions between DnaJ, DnaK and GrpE are required for fully efficient folding. This is Protein GrpE from Rhodopseudomonas palustris (strain BisB5).